We begin with the raw amino-acid sequence, 175 residues long: uncharacterized protein (175 aa).

This is an uncharacterized protein from Archaeoglobus fulgidus (strain ATCC 49558 / DSM 4304 / JCM 9628 / NBRC 100126 / VC-16).